The chain runs to 204 residues: Small ribosomal subunit protein uS4 (204 aa).

A disordered region spans residues 25 to 47 (SPVNKREYGPGQHGQRRKKPSDY). The 64-residue stretch at 93 to 156 (RRLDAVVYRM…KQFAFVMEAA (64 aa)) folds into the S4 RNA-binding domain.

It belongs to the universal ribosomal protein uS4 family. As to quaternary structure, part of the 30S ribosomal subunit. Contacts protein S5. The interaction surface between S4 and S5 is involved in control of translational fidelity.

Its function is as follows. One of the primary rRNA binding proteins, it binds directly to 16S rRNA where it nucleates assembly of the body of the 30S subunit. Functionally, with S5 and S12 plays an important role in translational accuracy. In Rhodospirillum centenum (strain ATCC 51521 / SW), this protein is Small ribosomal subunit protein uS4.